The following is a 219-amino-acid chain: Cytidylate kinase (219 aa).

21–29 is a binding site for ATP; sequence GPAASGKGT.

Belongs to the cytidylate kinase family. Type 1 subfamily.

Its subcellular location is the cytoplasm. It catalyses the reaction CMP + ATP = CDP + ADP. The enzyme catalyses dCMP + ATP = dCDP + ADP. This chain is Cytidylate kinase, found in Rickettsia prowazekii (strain Madrid E).